We begin with the raw amino-acid sequence, 168 residues long: Transcription antitermination protein NusB (168 aa).

Belongs to the NusB family.

Its function is as follows. Involved in transcription antitermination. Required for transcription of ribosomal RNA (rRNA) genes. Binds specifically to the boxA antiterminator sequence of the ribosomal RNA (rrn) operons. This Chlamydia trachomatis serovar A (strain ATCC VR-571B / DSM 19440 / HAR-13) protein is Transcription antitermination protein NusB.